We begin with the raw amino-acid sequence, 270 residues long: Imidazole glycerol phosphate synthase subunit HisF (270 aa).

Catalysis depends on residues Asp11 and Asp135.

The protein belongs to the HisA/HisF family. Heterodimer of HisH and HisF.

It is found in the cytoplasm. It catalyses the reaction 5-[(5-phospho-1-deoxy-D-ribulos-1-ylimino)methylamino]-1-(5-phospho-beta-D-ribosyl)imidazole-4-carboxamide + L-glutamine = D-erythro-1-(imidazol-4-yl)glycerol 3-phosphate + 5-amino-1-(5-phospho-beta-D-ribosyl)imidazole-4-carboxamide + L-glutamate + H(+). The protein operates within amino-acid biosynthesis; L-histidine biosynthesis; L-histidine from 5-phospho-alpha-D-ribose 1-diphosphate: step 5/9. Functionally, IGPS catalyzes the conversion of PRFAR and glutamine to IGP, AICAR and glutamate. The HisF subunit catalyzes the cyclization activity that produces IGP and AICAR from PRFAR using the ammonia provided by the HisH subunit. The protein is Imidazole glycerol phosphate synthase subunit HisF of Haloquadratum walsbyi (strain DSM 16790 / HBSQ001).